Here is a 29-residue protein sequence, read N- to C-terminus: MDIVSIGWAALMVVFTFSLSLVVWGRSGL.

Residues 3-23 traverse the membrane as a helical segment; the sequence is IVSIGWAALMVVFTFSLSLVV.

Belongs to the PetN family. In terms of assembly, the 4 large subunits of the cytochrome b6-f complex are cytochrome b6, subunit IV (17 kDa polypeptide, PetD), cytochrome f and the Rieske protein, while the 4 small subunits are PetG, PetL, PetM and PetN. The complex functions as a dimer.

Its subcellular location is the plastid. The protein localises to the chloroplast thylakoid membrane. In terms of biological role, component of the cytochrome b6-f complex, which mediates electron transfer between photosystem II (PSII) and photosystem I (PSI), cyclic electron flow around PSI, and state transitions. This is Cytochrome b6-f complex subunit 8 from Zygnema circumcarinatum (Green alga).